We begin with the raw amino-acid sequence, 368 residues long: Phospho-N-acetylmuramoyl-pentapeptide-transferase (368 aa).

The next 9 membrane-spanning stretches (helical) occupy residues 30–50, 72–92, 95–115, 139–159, 169–189, 208–228, 238–258, 264–286, and 345–365; these read AAAITALLITLFVGPGFIKYL, LPTMGGLLIIFSIEISVLLWS, IDPHVWLIMLAILWMGIIGFI, VTLGLVVGCYTWYDPSFSVLL, YLTIDYGYFYIPIVIFIITAV, AIVVMGLGGFSYLAGNAVYAV, GGEIAVVSMAIVMACVGFLWF, EIIMGDTGSLALGSAIAVIALLI, and KIVIRFWILTILFFLASLMTL.

Belongs to the glycosyltransferase 4 family. MraY subfamily. Requires Mg(2+) as cofactor.

The protein localises to the cell inner membrane. It catalyses the reaction UDP-N-acetyl-alpha-D-muramoyl-L-alanyl-gamma-D-glutamyl-meso-2,6-diaminopimeloyl-D-alanyl-D-alanine + di-trans,octa-cis-undecaprenyl phosphate = di-trans,octa-cis-undecaprenyl diphospho-N-acetyl-alpha-D-muramoyl-L-alanyl-D-glutamyl-meso-2,6-diaminopimeloyl-D-alanyl-D-alanine + UMP. The protein operates within cell wall biogenesis; peptidoglycan biosynthesis. Functionally, catalyzes the initial step of the lipid cycle reactions in the biosynthesis of the cell wall peptidoglycan: transfers peptidoglycan precursor phospho-MurNAc-pentapeptide from UDP-MurNAc-pentapeptide onto the lipid carrier undecaprenyl phosphate, yielding undecaprenyl-pyrophosphoryl-MurNAc-pentapeptide, known as lipid I. This chain is Phospho-N-acetylmuramoyl-pentapeptide-transferase, found in Pelodictyon phaeoclathratiforme (strain DSM 5477 / BU-1).